The following is a 187-amino-acid chain: MNLTNHFLVAMPSMKDPYFKRSVIYICEHNQDGAMGLMINAPIDITVGGMLKQVDIEPAYPQSHQENLKKPVFNGGPVSEDRGFILHRPRDHYESSMKMTDDIAVTTSKDILTVLGTEAEPEGYIVALGYSGWSAGQLEVELTENSWLTIEADPELIFNTPVHEKWQKAIQKLGISPAQLSSDAGHA.

Belongs to the UPF0301 (AlgH) family.

This is UPF0301 protein VC_0467 from Vibrio cholerae serotype O1 (strain ATCC 39315 / El Tor Inaba N16961).